We begin with the raw amino-acid sequence, 453 residues long: Secreted triacylglycerol lipase LIP2 (453 aa).

Positions Met-1 to Ala-19 are cleaved as a signal peptide. N-linked (GlcNAc...) asparagine glycosylation is present at Asn-98. Cys-115 and Cys-284 are oxidised to a cystine. The active-site Nucleophile is Ser-197. Asn-230 carries N-linked (GlcNAc...) asparagine glycosylation. Active-site residues include Asp-344 and His-378. Cys-360 and Cys-406 are oxidised to a cystine.

The protein belongs to the AB hydrolase superfamily. Lipase family. Class Lip subfamily.

The protein resides in the secreted. The catalysed reaction is a triacylglycerol + H2O = a diacylglycerol + a fatty acid + H(+). The enzyme catalyses a monoacylglycerol + H2O = glycerol + a fatty acid + H(+). It carries out the reaction a diacylglycerol + H2O = a monoacylglycerol + a fatty acid + H(+). With respect to regulation, the activity is significantly increased in the presence of Triton X-100 and partially inhibited by PMSF but unaffected by univalent and divalent metal ions. Activity is significantly decreased in acetate buffer compared to that in citrate buffer at the same pH. Its function is as follows. Major secreted lipase involved in Dandruff and seborrheic dermatitis (D/SD) probably via lipase-mediated breakdown of sebaceous lipids and release of irritating free fatty acids. Has triacylglycerol lipase activity and is able to hydrolyze triolein, tristearin, trilinolein, tripalmitoylglycerol and trihexadecenoin. Hydrolyze diacylglycerols such as distearin, dilinolein, dipalmitoylglycerol and dipalmitolein. Shows high esterase activity against 4-nitrophenyl palmitate and 1-naphthyl palmitate but not 1-naphthyl acetate, suggesting that it specifically recognizes fatty acids. Mostly converts monoolein to di- and triolein, while free fatty acids are only produced in low amounts. This is Secreted triacylglycerol lipase LIP2 from Malassezia globosa (strain ATCC MYA-4612 / CBS 7966) (Dandruff-associated fungus).